Reading from the N-terminus, the 583-residue chain is SHC-transforming protein 1 (583 aa).

M1 is modified (N-acetylmethionine). The segment at 1 to 92 is disordered; that stretch reads MDLLPPKPKY…EPGRAADDGE (92 aa). Low complexity predominate over residues 16–44; it reads ESLSSLEEGASGSTPPEELPSPSASSLGP. S36 and S139 each carry phosphoserine. N6-acetyllysine is present on K154. A PID domain is found at 156–339; it reads MGPGVSYLVR…AGFDGSAWDE (184 aa). Positions 340 to 487 are CH1; that stretch reads EEEEPPDHQY…SMAEQLRGEP (148 aa). Phosphotyrosine occurs at positions 349 and 350. Positions 372–384 are enriched in low complexity; it reads AAPGAARPTAPNA. The segment at 372–415 is disordered; sequence AAPGAARPTAPNAQTPSHLGATLPVGQPVGGDPEVRKQMPPPPP. Position 427 is a phosphotyrosine (Y427). The residue at position 453 (S453) is a Phosphoserine. An SH2 domain is found at 488–579; the sequence is WFHGKLSRRE…GSELCLQQPV (92 aa).

As to quaternary structure, interacts with CPNE3; this interaction may mediate the binding of CPNE3 with ERBB2. Interacts with the NPXY motif of tyrosine-phosphorylated IGF1R and INSR in vitro via the PID domain. Once activated, binds to GRB2. Interacts with tyrosine-phosphorylated CD3T and DDR2. Interacts with the N-terminal region of SH2B2. Interacts with phosphorylated LRP1 and IRS4. Interacts with INPP5D/SHIP1 and INPPL1/SHIP2. Interacts with TRIM31. Interacts with PTPN6/SHP (tyrosine phosphorylated). Identified in a complex containing FGFR4, NCAM1, CDH2, PLCG1, FRS2, SRC, SHC1, GAP43 and CTT. Interacts with ALK, GAB2, GRB7 and KIT. Interacts with FLT4 (tyrosine-phosphorylated). Interacts with EPHB1 and GRB2; activates the MAPK/ERK cascade to regulate cell migration. Interacts with PDGFRB (tyrosine-phosphorylated). Interacts with ERBB4. Interacts with TEK/TIE2 (tyrosine-phosphorylated). Interacts with the Trk receptors NTRK1, NTRK2 and NTRK3; in a phosphotyrosine-dependent manner. Interacts with PTK2/FAK1. Interacts with CEACAM1; this interaction is CEACAM1-phosphorylation-dependent and mediates interaction with EGFR or INSR resulting in decrease coupling of SHC1 to the MAPK3/ERK1-MAPK1/ERK2 pathway. Interacts (via PID domain) with PEAK1 (when phosphorylated at 'Tyr-1188'). Found in a complex with PPP1CA, PPP1CC, SHC1 and PEAK1. In terms of assembly, (Microbial infection) Interacts with herpes simplex virus 1 UL46. Phosphorylated by activated epidermal growth factor receptor. Phosphorylated in response to FLT4 and KIT signaling. Isoform p46Shc and isoform p52Shc are phosphorylated on tyrosine residues of the Pro-rich domain. Isoform p66Shc is phosphorylated on Ser-36 by PRKCB upon treatment with insulin, hydrogen peroxide or irradiation with ultraviolet light. Tyrosine phosphorylated in response to FLT3 signaling. Tyrosine phosphorylated by activated PTK2B/PYK2. Tyrosine phosphorylated by ligand-activated ALK. Tyrosine phosphorylated by ligand-activated PDGFRB. Tyrosine phosphorylated by TEK/TIE2. May be tyrosine phosphorylated by activated PTK2/FAK1; tyrosine phosphorylation was seen in an astrocytoma biopsy, where PTK2/FAK1 kinase activity is high, but not in normal brain tissue. Isoform p52Shc dephosphorylation by PTPN2 may regulate interaction with GRB2. In terms of tissue distribution, widely expressed. Expressed in neural stem cells but absent in mature neurons.

The protein resides in the cytoplasm. It localises to the cell junction. It is found in the focal adhesion. The protein localises to the mitochondrion matrix. Its subcellular location is the mitochondrion. Signaling adapter that couples activated growth factor receptors to signaling pathways. Participates in a signaling cascade initiated by activated KIT and KITLG/SCF. Isoform p46Shc and isoform p52Shc, once phosphorylated, couple activated receptor tyrosine kinases to Ras via the recruitment of the GRB2/SOS complex and are implicated in the cytoplasmic propagation of mitogenic signals. Isoform p46Shc and isoform p52Shc may thus function as initiators of the Ras signaling cascade in various non-neuronal systems. Isoform p66Shc does not mediate Ras activation, but is involved in signal transduction pathways that regulate the cellular response to oxidative stress and life span. Isoform p66Shc acts as a downstream target of the tumor suppressor p53 and is indispensable for the ability of stress-activated p53 to induce elevation of intracellular oxidants, cytochrome c release and apoptosis. The expression of isoform p66Shc has been correlated with life span. Participates in signaling downstream of the angiopoietin receptor TEK/TIE2, and plays a role in the regulation of endothelial cell migration and sprouting angiogenesis. The protein is SHC-transforming protein 1 (SHC1) of Homo sapiens (Human).